The following is a 540-amino-acid chain: Bifunctional pantoate ligase/cytidylate kinase (540 aa).

Positions 1–280 (MQWLRTVAAL…VGQTRLIDNL (280 aa)) are pantoate--beta-alanine ligase. ATP is bound at residue 28-35 (MGSLHEGH). The active-site Proton donor is His-35. Gln-59 is a binding site for (R)-pantoate. Gln-59 provides a ligand contact to beta-alanine. Position 150–153 (150–153 (GQKD)) interacts with ATP. Gln-156 serves as a coordination point for (R)-pantoate. ATP is bound by residues Val-179 and 187–190 (YSSR). Positions 281 to 540 (LLSPEGVDPL…RSGAAHFDII (260 aa)) are cytidylate kinase. Positions 288–307 (DPLPQEQQSAVPPSPKRGRR) are disordered.

It in the N-terminal section; belongs to the pantothenate synthetase family. In the C-terminal section; belongs to the cytidylate kinase family. Type 1 subfamily.

Its subcellular location is the cytoplasm. The enzyme catalyses (R)-pantoate + beta-alanine + ATP = (R)-pantothenate + AMP + diphosphate + H(+). The catalysed reaction is CMP + ATP = CDP + ADP. It catalyses the reaction dCMP + ATP = dCDP + ADP. The protein operates within cofactor biosynthesis; (R)-pantothenate biosynthesis; (R)-pantothenate from (R)-pantoate and beta-alanine: step 1/1. Its function is as follows. Catalyzes the condensation of pantoate with beta-alanine in an ATP-dependent reaction via a pantoyl-adenylate intermediate. Functionally, catalyzes the transfer of a phosphate group from ATP to either CMP or dCMP to form CDP or dCDP and ADP, respectively. This chain is Bifunctional pantoate ligase/cytidylate kinase, found in Synechococcus sp. (strain JA-3-3Ab) (Cyanobacteria bacterium Yellowstone A-Prime).